Reading from the N-terminus, the 320-residue chain is MEVEIVWLVKAAWITVWIVSILPLVIASIPSSKLNSFRELVLSFAGRGKILHPSSQKFTVPQKFFGHFYVVGVVWTTLLLAATWMYACKMAGGSHVFSFHMTHVEHRFKVGRAVFLLLLMEIHVLRRVIESFYVFKYSTSARMHILAYVGALFYYVAAPLSLCSNIAPEVARFVGSQVAEFIASGKSHSHDFNLLLSISPLMKLGSLQWIGGAIFLWGWIHQRRCHAILGSLREYPSQAKEYIIPYGDWFEMVSCPHFLAEIVLYLGLLISSGGTDISIWLLFGFVAANLTYAAGETHRWYLQKFENYPASRHAIFPHVY.

A run of 6 helical transmembrane segments spans residues Ile-5–Val-25, Phe-64–Trp-84, Met-143–Cys-163, Pro-200–Ile-220, Ile-243–Val-263, and Leu-266–Val-286.

It belongs to the steroid 5-alpha reductase family. Polyprenal reductase subfamily. As to expression, expressed in roots and flowers.

It localises to the cell membrane. It catalyses the reaction a di-trans,poly-cis-dolichal + NADP(+) = a di-trans,poly-cis-polyprenal + NADPH + H(+). Its pathway is protein modification; protein glycosylation. In terms of biological role, plays a key role in early steps of protein N-linked glycosylation by being involved in the conversion of polyprenol into dolichol. Acts as a polyprenal reductase that mediates the reduction of polyprenal into dolichal in a NADP-dependent mechanism. Dolichols are required for the synthesis of dolichol-linked monosaccharides and the oligosaccharide precursor used for N-glycosylation. Involved in the regulation of plant growth and reproductive processes. In Arabidopsis thaliana (Mouse-ear cress), this protein is Polyprenal reductase 1.